Here is a 462-residue protein sequence, read N- to C-terminus: O-methyltransferase CTB2 (462 aa).

Asp-289 lines the S-adenosyl-L-methionine pocket. Catalysis depends on His-340, which acts as the Proton acceptor.

The protein belongs to the class I-like SAM-binding methyltransferase superfamily. Cation-independent O-methyltransferase family. COMT subfamily.

It functions in the pathway mycotoxin biosynthesis. Functionally, O-methyltransferase; part of the gene cluster that mediates the biosynthesis of cercosporin, a light-activated, non-host-selective toxin. The perylenequinone chromophore of cercosporin absorbs light energy to attain an electronically-activated triplet state and produces active oxygen species such as the hydroxyl radical, superoxide, hydrogen peroxide or singlet oxygen upon reaction with oxygen molecules. These reactive oxygen species cause damage to various cellular components including lipids, proteins and nucleic acids. The first step of cercosporin biosynthesis is performed by the polyketide synthase CTB1 which catalyzes the formation of nor-toralactone. The starter unit acyltransferase (SAT) domain of CTB1 initiates polyketide extension by the selective utilization of acetyl-CoA, which is elongated to the heptaketide in the beta-ketoacyl synthase (KS) domain by successive condensations with six malonyl units introduced by the malonyl acyltransferase (MAT) domain. The product template (PT) domain catalyzes C4-C9 and C2-C11 aldol cyclizations and dehydrations to a trihydroxynaphthalene, which is thought to be delivered to the thioesterase (TE) domain for product release. The bifunctional enzyme CTB3 then methylates nor-toralactone to toralactone before conducting an unusual oxidative aromatic ring opening. The O-methyltransferase CTB2 further methylates the nascent OH-6 of the CBT3 product, blocking further oxidation at this site before the reductase CTB6 reduces the 2-oxopropyl ketone at position C7, giving naphthalene. The FAD-dependent monooxygenase CTB5 in concert with the multicopper oxidase CTB12 are responsible for homodimerization of naphthalene with CTB7 installing the dioxepine moiety, finally producing cercosporin. The fasciclin domain-containing protein CTB11 might act with CTB5 and CTB12 whereas the roles of CTB9 and CTB10 have still to be elucidated. In Cercospora beticola (Sugarbeet leaf spot fungus), this protein is O-methyltransferase CTB2.